The primary structure comprises 347 residues: Gas vesicle ATPase GvpN1 (347 aa).

Over residues 1-11 (MTNESRKRKVR) the composition is skewed to basic residues. Positions 1-64 (MTNESRKRKV…EGFVPEEQSF (64 aa)) are disordered. A compositionally biased stretch (basic and acidic residues) spans 18–55 (SRGDKKQGRSQSRDDKEIERLERQNDARGQESSTHVDE). ATP is bound at residue 91 to 98 (GPTGCGKT).

This sequence belongs to the CbbQ/NirQ/NorQ/GpvN family. As to quaternary structure, forms homodimers, forms a GvpN1-GvpO1 heterodimer, interacts with GvpC1 (via the latter's C-terminus) and GvpL, might interact with GvpA1.

It is found in the gas vesicle. The protein resides in the cytoplasm. The enzyme catalyses ATP + H2O = ADP + phosphate + H(+). An ATPase that functions in gas vesicle formation. A minor component of the gas vesicle, also found in soluble extracts. Probably enhances gas vesicle formation. Gas vesicles are hollow, gas filled proteinaceous nanostructures found in several microbial planktonic microorganisms. They allow positioning of halobacteria at the optimal depth for growth in the poorly aerated, shallow brine pools of their habitat. Functionally, expression of a 9.5 kb p-vac DNA fragment containing 2 divergently transcribed regions (gvpD-gvpE-gvpF-gvpG-gvpH-gvpI-gvpJ-gvpK-gvpL-gvpM and gvpA-gvpC-gvpN-gvpO) allows H.volcanii to produce gas vesicles. A similar region restores gas vesicle production in H.halobium without the p-vac locus, but which still have the c-vac locus. This is Gas vesicle ATPase GvpN1 (gvpN11) from Halobacterium salinarum (strain ATCC 700922 / JCM 11081 / NRC-1) (Halobacterium halobium).